The chain runs to 171 residues: 3-hydroxydecanoyl-[acyl-carrier-protein] dehydratase (171 aa).

The active site involves histidine 70.

It belongs to the thioester dehydratase family. FabA subfamily. Homodimer.

It localises to the cytoplasm. It carries out the reaction a (3R)-hydroxyacyl-[ACP] = a (2E)-enoyl-[ACP] + H2O. It catalyses the reaction (3R)-hydroxydecanoyl-[ACP] = (2E)-decenoyl-[ACP] + H2O. The catalysed reaction is (2E)-decenoyl-[ACP] = (3Z)-decenoyl-[ACP]. It participates in lipid metabolism; fatty acid biosynthesis. Its function is as follows. Necessary for the introduction of cis unsaturation into fatty acids. Catalyzes the dehydration of (3R)-3-hydroxydecanoyl-ACP to E-(2)-decenoyl-ACP and then its isomerization to Z-(3)-decenoyl-ACP. Can catalyze the dehydratase reaction for beta-hydroxyacyl-ACPs with saturated chain lengths up to 16:0, being most active on intermediate chain length. This Pseudomonas fluorescens (strain Pf0-1) protein is 3-hydroxydecanoyl-[acyl-carrier-protein] dehydratase.